A 287-amino-acid chain; its full sequence is Zinc finger protein SNAI3 (287 aa).

The tract at residues 1 to 20 is SNAG domain; sequence MPRSFLVKTHSSHRVPNYGK. C2H2-type zinc fingers lie at residues 147–169, 178–200, 204–226, and 232–254; these read FECI…QQLH, FTCR…IRTH, CICK…IRTH, and YTCS…LQTH. The segment at 260 to 282 adopts a C2H2-type 5; degenerate zinc-finger fold; it reads YRCAVCPKAFSRMSLLARHEEAG.

Belongs to the snail C2H2-type zinc-finger protein family. Highly expressed in skeletal muscle and thymus. Lower expression in heart, lung and spleen.

It is found in the nucleus. In terms of biological role, seems to inhibit myoblast differentiation. Transcriptional repressor of E-box-dependent transactivation of downstream myogenic bHLHs genes. Binds preferentially to the canonical E-box sequences 5'-CAGGTG-3' and 5'-CACCTG-3'. This Mus musculus (Mouse) protein is Zinc finger protein SNAI3 (Snai3).